Here is a 97-residue protein sequence, read N- to C-terminus: ATP-dependent Clp protease adapter protein ClpS (97 aa).

Belongs to the ClpS family. As to quaternary structure, binds to the N-terminal domain of the chaperone ClpA.

In terms of biological role, involved in the modulation of the specificity of the ClpAP-mediated ATP-dependent protein degradation. The polypeptide is ATP-dependent Clp protease adapter protein ClpS (Nostoc sp. (strain PCC 7120 / SAG 25.82 / UTEX 2576)).